Consider the following 213-residue polypeptide: Imidazole glycerol phosphate synthase subunit HisH (213 aa).

Positions Ser4–Pro213 constitute a Glutamine amidotransferase type-1 domain. Catalysis depends on Cys83, which acts as the Nucleophile. Active-site residues include His193 and Glu195.

In terms of assembly, heterodimer of HisH and HisF.

The protein resides in the cytoplasm. The catalysed reaction is 5-[(5-phospho-1-deoxy-D-ribulos-1-ylimino)methylamino]-1-(5-phospho-beta-D-ribosyl)imidazole-4-carboxamide + L-glutamine = D-erythro-1-(imidazol-4-yl)glycerol 3-phosphate + 5-amino-1-(5-phospho-beta-D-ribosyl)imidazole-4-carboxamide + L-glutamate + H(+). The enzyme catalyses L-glutamine + H2O = L-glutamate + NH4(+). The protein operates within amino-acid biosynthesis; L-histidine biosynthesis; L-histidine from 5-phospho-alpha-D-ribose 1-diphosphate: step 5/9. In terms of biological role, IGPS catalyzes the conversion of PRFAR and glutamine to IGP, AICAR and glutamate. The HisH subunit catalyzes the hydrolysis of glutamine to glutamate and ammonia as part of the synthesis of IGP and AICAR. The resulting ammonia molecule is channeled to the active site of HisF. This Burkholderia multivorans (strain ATCC 17616 / 249) protein is Imidazole glycerol phosphate synthase subunit HisH.